The following is a 175-amino-acid chain: Nicotinamide-nucleotide adenylyltransferase 1 (175 aa).

This sequence belongs to the archaeal NMN adenylyltransferase family.

It localises to the cytoplasm. The enzyme catalyses beta-nicotinamide D-ribonucleotide + ATP + H(+) = diphosphate + NAD(+). Its pathway is cofactor biosynthesis; NAD(+) biosynthesis; NAD(+) from nicotinamide D-ribonucleotide: step 1/1. The protein is Nicotinamide-nucleotide adenylyltransferase 1 of Sulfolobus acidocaldarius (strain ATCC 33909 / DSM 639 / JCM 8929 / NBRC 15157 / NCIMB 11770).